We begin with the raw amino-acid sequence, 435 residues long: Eukaryotic peptide chain release factor subunit 1 (435 aa).

The protein belongs to the eukaryotic release factor 1 family. In terms of assembly, heterodimer of two subunits, one of which binds GTP.

It localises to the cytoplasm. In terms of biological role, directs the termination of nascent peptide synthesis (translation) in response to the termination codon UGA. In T.thermophila UAA and UAG codes for glutamine. This is Eukaryotic peptide chain release factor subunit 1 (ERF1) from Tetrahymena thermophila.